The chain runs to 1188 residues: Integrin alpha-11 (1188 aa).

An N-terminal signal peptide occupies residues 1–22 (MDLPRGLVVAWALSLWPGFTDT). The Extracellular segment spans residues 23–1141 (FNMDTRKPRV…ISKQEDWQVP (1119 aa)). FG-GAP repeat units follow at residues 24-85 (NMDT…NCTK) and 91-151 (VTLS…FSKT). Cys76 and Cys83 are disulfide-bonded. N-linked (GlcNAc...) asparagine glycosylation is found at Asn82 and Asn95. 2 disulfides stabilise this stretch: Cys121–Cys139 and Cys129–Cys159. Positions 164 to 345 (DIVIVLDGSN…AALKDIVDAL (182 aa)) constitute a VWFA domain. 5 N-linked (GlcNAc...) asparagine glycosylation sites follow: Asn291, Asn331, Asn358, Asn449, and Asn462. FG-GAP repeat units follow at residues 355 to 406 (TNKN…VIPL), 411 to 461 (LKEF…TMHN), 462 to 527 (NRSL…LFVY), 528 to 586 (NGTL…SILK), and 590 to 650 (QRIT…FEPS). Residues Asp488, Asp490, Asp492, and Asp496 each coordinate Ca(2+). Asn528 carries N-linked (GlcNAc...) asparagine glycosylation. Positions 551, 553, 555, 559, 613, 615, 617, and 621 each coordinate Ca(2+). The N-linked (GlcNAc...) asparagine glycan is linked to Asn642. 3 cysteine pairs are disulfide-bonded: Cys659/Cys668, Cys674/Cys729, and Cys781/Cys787. Asn694 carries N-linked (GlcNAc...) asparagine glycosylation. Asn857 carries N-linked (GlcNAc...) asparagine glycosylation. A disulfide bridge connects residues Cys881 and Cys893. 5 N-linked (GlcNAc...) asparagine glycosylation sites follow: Asn894, Asn973, Asn1031, Asn1039, and Asn1059. Residues 1142–1164 (IWIIVGSTLGGLLLLALLVLALW) traverse the membrane as a helical segment. The Cytoplasmic segment spans residues 1165–1188 (KLGFFRSARRRREPGLDPTPKVLE).

The protein belongs to the integrin alpha chain family. Heterodimer of an alpha and a beta subunit. Alpha-11 associates with beta-1. Interacts with RAB21. In terms of tissue distribution, according to PubMed:10464311, highest levels of expression in uterus and heart, intermediate levels in skeletal muscle and intermediate to low levels in pancreas, kidney and placenta. According to PubMed:10486209, also found in brain, colon, lung, small intestine, stomach, testis, salivary glands, thyroid glands and prostate. Very low levels in peripheral blood lymphocytes, fetal brain and fetal liver.

The protein resides in the membrane. Functionally, integrin alpha-11/beta-1 is a receptor for collagen. The sequence is that of Integrin alpha-11 (ITGA11) from Homo sapiens (Human).